The chain runs to 154 residues: Small ribosomal subunit protein bS16 (154 aa).

The span at 111–121 (AAAGLAEAPTK) shows a compositional bias: low complexity. The segment at 111 to 154 (AAAGLAEAPTKPAKKAAKAEAAPKTDEAAPKTEEQAGAGSGEQG) is disordered. Residues 127–144 (AKAEAAPKTDEAAPKTEE) are compositionally biased toward basic and acidic residues.

It belongs to the bacterial ribosomal protein bS16 family.

The protein is Small ribosomal subunit protein bS16 of Salinispora tropica (strain ATCC BAA-916 / DSM 44818 / JCM 13857 / NBRC 105044 / CNB-440).